The primary structure comprises 357 residues: Peptide chain release factor 1 (357 aa).

Gln-234 carries the post-translational modification N5-methylglutamine. Residues 284 to 304 (RIEGERSEDRKSKIGTGDRSE) are disordered.

This sequence belongs to the prokaryotic/mitochondrial release factor family. Post-translationally, methylated by PrmC. Methylation increases the termination efficiency of RF1.

The protein localises to the cytoplasm. Peptide chain release factor 1 directs the termination of translation in response to the peptide chain termination codons UAG and UAA. The chain is Peptide chain release factor 1 from Pelagibacter ubique (strain HTCC1062).